The following is a 178-amino-acid chain: Large ribosomal subunit protein uL6 (178 aa).

It belongs to the universal ribosomal protein uL6 family. As to quaternary structure, part of the 50S ribosomal subunit.

This protein binds to the 23S rRNA, and is important in its secondary structure. It is located near the subunit interface in the base of the L7/L12 stalk, and near the tRNA binding site of the peptidyltransferase center. This Campylobacter jejuni subsp. doylei (strain ATCC BAA-1458 / RM4099 / 269.97) protein is Large ribosomal subunit protein uL6.